Here is a 429-residue protein sequence, read N- to C-terminus: MTIITDVYAREVLDSRGNPTVEVEVYLESGAMGRALVPSGASTGEYEAVELRDGGERFLGKGVLKAVENVNEVIAPELIGFDALDQIGIDQHMIELDGTENKGKLGANAILGVSMAVARAAANALDLPLYVYLGGFNAKQLPVPMMNIINGGEHADNNVDIQEFMIMPVGAESFKEALRTGTEIFHSLKKVLKSKGYNTAVGDEGGFAPNLSSNEEALQTIIEAIEQAGYTPGEQVKLAMDVASSELYNKEDGKYHLSGEGKVLSSEEMVAFYEELVAKYPIISIEDGLDENDWEGHKMLTDRLGDKVQLVGDDLFVTNTKKLAQGIEQGVGNSILIKVNQIGTLTETFDAIEMAKRAGYTAVISHRSGETEDSTIADIAVATNAGQIKTGAPSRTDRVAKYNQLLRIEDELGNLAQYNGLQSFYNLKK.

Q162 contacts (2R)-2-phosphoglycerate. E204 acts as the Proton donor in catalysis. Residues D241, E286, and D313 each coordinate Mg(2+). The (2R)-2-phosphoglycerate site is built by K338, R367, S368, and K389. Residue K338 is the Proton acceptor of the active site.

Belongs to the enolase family. It depends on Mg(2+) as a cofactor.

The protein resides in the cytoplasm. Its subcellular location is the secreted. It localises to the cell surface. The enzyme catalyses (2R)-2-phosphoglycerate = phosphoenolpyruvate + H2O. It participates in carbohydrate degradation; glycolysis; pyruvate from D-glyceraldehyde 3-phosphate: step 4/5. Its function is as follows. Catalyzes the reversible conversion of 2-phosphoglycerate (2-PG) into phosphoenolpyruvate (PEP). It is essential for the degradation of carbohydrates via glycolysis. This is Enolase from Halalkalibacterium halodurans (strain ATCC BAA-125 / DSM 18197 / FERM 7344 / JCM 9153 / C-125) (Bacillus halodurans).